Reading from the N-terminus, the 388-residue chain is Alpha-2B adrenergic receptor (388 aa).

A helical membrane pass occupies residues A1 to L25. Residues T26–L36 lie on the Cytoplasmic side of the membrane. A helical transmembrane segment spans residues F37–L62. Over G63–C72 the chain is Extracellular. C72 and C151 are oxidised to a cystine. The chain crosses the membrane as a helical span at residues E73 to L95. Over D96 to K117 the chain is Cytoplasmic. The helical transmembrane segment at C118–D140 threads the bilayer. Over Q141–E156 the chain is Extracellular. The helical transmembrane segment at A157–L180 threads the bilayer. At R181–V352 the chain is on the cytoplasmic side. Residues G193–Q309 are disordered. The span at P239–E249 shows a compositional bias: basic and acidic residues. Residues P279–E291 are compositionally biased toward acidic residues. The segment covering P292–A302 has biased composition (low complexity). Residues L353–I376 form a helical membrane-spanning segment. The Extracellular portion of the chain corresponds to C377–H385. A helical transmembrane segment spans residues G386–F388.

It belongs to the G-protein coupled receptor 1 family. Adrenergic receptor subfamily. ADRA2B sub-subfamily. As to quaternary structure, interacts with RAB26. Interacts with PPP1R9B.

The protein resides in the cell membrane. Alpha-2 adrenergic receptors mediate the catecholamine-induced inhibition of adenylate cyclase through the action of G proteins. In Orycteropus afer (Aardvark), this protein is Alpha-2B adrenergic receptor (ADRA2B).